The following is a 504-amino-acid chain: Maturase K (504 aa).

It belongs to the intron maturase 2 family. MatK subfamily.

It is found in the plastid. The protein localises to the chloroplast. In terms of biological role, usually encoded in the trnK tRNA gene intron. Probably assists in splicing its own and other chloroplast group II introns. In Aruncus dioicus (Goat's beard), this protein is Maturase K.